The following is a 227-amino-acid chain: Large ribosomal subunit protein uL1 (227 aa).

This sequence belongs to the universal ribosomal protein uL1 family. Part of the 50S ribosomal subunit.

Binds directly to 23S rRNA. The L1 stalk is quite mobile in the ribosome, and is involved in E site tRNA release. Its function is as follows. Protein L1 is also a translational repressor protein, it controls the translation of the L11 operon by binding to its mRNA. The polypeptide is Large ribosomal subunit protein uL1 (Mesoplasma florum (strain ATCC 33453 / NBRC 100688 / NCTC 11704 / L1) (Acholeplasma florum)).